The primary structure comprises 612 residues: Beta-mannosyltransferase 5 (612 aa).

Topologically, residues 1–12 (MVQKQYRFAPKS) are cytoplasmic. The helical transmembrane segment at 13–33 (IFTFVFLCFVAIVVIISTSSL) threads the bilayer. Residues 34 to 612 (VQVEESLDPI…YRAHLKRWQN (579 aa)) are Extracellular-facing. Residues Asn224, Asn230, and Asn480 are each glycosylated (N-linked (GlcNAc...) asparagine).

Belongs to the BMT family.

It localises to the membrane. In terms of biological role, beta-mannosyltransferase involved in cell wall biosynthesis. Required for beta-1,2-mannose transfer on phospholipomannan. This chain is Beta-mannosyltransferase 5 (BMT5), found in Candida albicans (strain SC5314 / ATCC MYA-2876) (Yeast).